Here is a 250-residue protein sequence, read N- to C-terminus: 3alpha-hydroxysteroid dehydrogenase (250 aa).

3 residues coordinate NADP(+): N93, Y158, and K162. Y158 (proton acceptor) is an active-site residue.

This sequence belongs to the short-chain dehydrogenases/reductases (SDR) family.

The enzyme catalyses lithocholate + NADP(+) = 3-oxo-5beta-cholan-24-oate + NADPH + H(+). It carries out the reaction deoxycholate + NADP(+) = 12alpha-hydroxy-3-oxo-5beta-cholan-24-oate + NADPH + H(+). It catalyses the reaction deoxycholate + NAD(+) = 12alpha-hydroxy-3-oxo-5beta-cholan-24-oate + NADH + H(+). The catalysed reaction is cholate + NADP(+) = 7alpha,12alpha-dihydroxy-3-oxo-5beta-cholan-24-oate + NADPH + H(+). The enzyme catalyses chenodeoxycholate + NADP(+) = 3-oxochenodeoxycholate + NADPH + H(+). In terms of biological role, involved in the modification of secondary bile acids into iso-bile acids (3beta-bile acids) via epimerization of the 3-OH group through a 3-oxo-intermediate. Catalyzes the oxidation of deoxycholate (DCA) and lithocholate (LCA) to yield 12-alpha-hydroxy-3-oxo-5-beta-cholan-24-oate (3-oxo-DCA) and 3-oxo-5-beta-cholan-24-oate (3-oxo-LCA), respectively. Is also able to catalyze the oxidation of cholate (CA) and chenodeoxycholate (CDCA) into 3-dehydrocholate (3-oxo-CA) and 7-alpha-hydroxy-3-oxo-5-beta-cholan-24-oate (3-oxo-CDCA), respectively. Can also catalyze the reverse reactions in vitro. Accepts both NADPH and NADH as cosubstrates. The conversion of the abundant bile acid DCA into isoDCA by the gut bacterium R.gnavus favors the growth of the keystone commensal genus Bacteroides, since isoDCA is less cytotoxic than its parent compound, DCA; iso-bile acids have thus a potential role in modulating gut community composition. The protein is 3alpha-hydroxysteroid dehydrogenase of Mediterraneibacter gnavus (strain ATCC 29149 / DSM 114966 / JCM 6515 / VPI C7-9) (Ruminococcus gnavus).